We begin with the raw amino-acid sequence, 862 residues long: DNA gyrase subunit A (862 aa).

One can recognise a Topo IIA-type catalytic domain in the interval 38-501 (LPDARDGLKP…DYDDIDVEDL (464 aa)). Tyrosine 126 acts as the O-(5'-phospho-DNA)-tyrosine intermediate in catalysis. Positions 528–534 (QKRGGKG) match the GyrA-box motif. The disordered stretch occupies residues 843–862 (KEESDDDDIVADDTQEQDME). The span at 845–862 (ESDDDDIVADDTQEQDME) shows a compositional bias: acidic residues.

This sequence belongs to the type II topoisomerase GyrA/ParC subunit family. In terms of assembly, heterotetramer, composed of two GyrA and two GyrB chains. In the heterotetramer, GyrA contains the active site tyrosine that forms a transient covalent intermediate with DNA, while GyrB binds cofactors and catalyzes ATP hydrolysis.

The protein localises to the cytoplasm. It catalyses the reaction ATP-dependent breakage, passage and rejoining of double-stranded DNA.. A type II topoisomerase that negatively supercoils closed circular double-stranded (ds) DNA in an ATP-dependent manner to modulate DNA topology and maintain chromosomes in an underwound state. Negative supercoiling favors strand separation, and DNA replication, transcription, recombination and repair, all of which involve strand separation. Also able to catalyze the interconversion of other topological isomers of dsDNA rings, including catenanes and knotted rings. Type II topoisomerases break and join 2 DNA strands simultaneously in an ATP-dependent manner. The polypeptide is DNA gyrase subunit A (Campylobacter fetus).